The following is a 302-amino-acid chain: Sulfate adenylyltransferase subunit 2 (302 aa).

The interval 280–302 (RQGRAIDHDQSGSMELKKRQGYF) is disordered.

This sequence belongs to the PAPS reductase family. CysD subfamily. In terms of assembly, heterodimer composed of CysD, the smaller subunit, and CysN.

The enzyme catalyses sulfate + ATP + H(+) = adenosine 5'-phosphosulfate + diphosphate. It participates in sulfur metabolism; hydrogen sulfide biosynthesis; sulfite from sulfate: step 1/3. With CysN forms the ATP sulfurylase (ATPS) that catalyzes the adenylation of sulfate producing adenosine 5'-phosphosulfate (APS) and diphosphate, the first enzymatic step in sulfur assimilation pathway. APS synthesis involves the formation of a high-energy phosphoric-sulfuric acid anhydride bond driven by GTP hydrolysis by CysN coupled to ATP hydrolysis by CysD. The sequence is that of Sulfate adenylyltransferase subunit 2 from Vibrio parahaemolyticus serotype O3:K6 (strain RIMD 2210633).